The primary structure comprises 275 residues: 3-methyl-2-oxobutanoate hydroxymethyltransferase (275 aa).

Positions 49 and 88 each coordinate Mg(2+). Residues aspartate 49–serine 50, aspartate 88, and lysine 118 each bind 3-methyl-2-oxobutanoate. Glutamate 120 contacts Mg(2+). The active-site Proton acceptor is glutamate 187.

This sequence belongs to the PanB family. In terms of assembly, homodecamer; pentamer of dimers. Mg(2+) serves as cofactor.

It is found in the cytoplasm. The enzyme catalyses 3-methyl-2-oxobutanoate + (6R)-5,10-methylene-5,6,7,8-tetrahydrofolate + H2O = 2-dehydropantoate + (6S)-5,6,7,8-tetrahydrofolate. It functions in the pathway cofactor biosynthesis; (R)-pantothenate biosynthesis; (R)-pantoate from 3-methyl-2-oxobutanoate: step 1/2. Its function is as follows. Catalyzes the reversible reaction in which hydroxymethyl group from 5,10-methylenetetrahydrofolate is transferred onto alpha-ketoisovalerate to form ketopantoate. The polypeptide is 3-methyl-2-oxobutanoate hydroxymethyltransferase (Rhodospirillum centenum (strain ATCC 51521 / SW)).